Consider the following 638-residue polypeptide: Signal recognition particle receptor subunit alpha (638 aa).

Disordered regions lie at residues 129-205 (KIRA…VELS), 218-245 (IQKHGRGLEKSSKSTKSDAPKEKGKKAP), and 262-315 (SAPT…ATKG). 2 stretches are compositionally biased toward basic and acidic residues: residues 137 to 146 (KKFEDSEKAK) and 153 to 165 (IETRGEKPKEKAK). Phosphoserine is present on S177. Residues 218 to 239 (IQKHGRGLEKSSKSTKSDAPKE) are compositionally biased toward basic and acidic residues. Position 284 is a phosphothreonine (T284). A phosphoserine mark is found at S296, S297, and S298. Residues 304–314 (AQNASKPSATK) are compositionally biased toward polar residues. The segment at 419 to 636 (YVVTFCGVNG…NAKAVVAALM (218 aa)) is NG domain. Position 425-432 (425-432 (GVNGVGKS)) interacts with GTP. Residue S473 is modified to Phosphoserine. 520–524 (DTAGR) lines the GTP pocket. At T578 the chain carries Phosphothreonine. 588–591 (TKFD) serves as a coordination point for GTP.

This sequence belongs to the GTP-binding SRP family. As to quaternary structure, heterodimer with SRPRB. Interacts with the signal recognition particle (SRP) complex subunit SRP54.

The protein localises to the endoplasmic reticulum membrane. Functionally, component of the SRP (signal recognition particle) receptor. Ensures, in conjunction with the signal recognition particle, the correct targeting of the nascent secretory proteins to the endoplasmic reticulum membrane system. Forms a guanosine 5'-triphosphate (GTP)-dependent complex with the SRP subunit SRP54. SRP receptor compaction and GTPase rearrangement drive SRP-mediated cotranslational protein translocation into the ER. The sequence is that of Signal recognition particle receptor subunit alpha from Canis lupus familiaris (Dog).